We begin with the raw amino-acid sequence, 161 residues long: D-amino-acid N-acetyltransferase HPA3 (161 aa).

At S2 the chain carries N-acetylserine. The 148-residue stretch at 14–161 folds into the N-acetyltransferase domain; that stretch reads IVVKAIEPKD…DKVLYKRNGY (148 aa). 98–111 lines the acetyl-CoA pocket; it reads LYVTERARVKGVGR.

This sequence belongs to the acetyltransferase family. GNAT subfamily. Autoacetylates in an intermolecular reaction.

It is found in the cytoplasm. Its subcellular location is the nucleus. It catalyses the reaction a D-alpha-amino acid + acetyl-CoA = an N-acetyl-D-amino acid + CoA + H(+). Its function is as follows. N-acetyltransferase that acts on a wide range of D-amino acids. Catalyzes the N-acetylation through an ordered bi-bi mechanism, in which acetyl-CoA is the first substrate to be bound and CoA is the last product to be liberated. D-amino acids are toxic for the cell and their N-acetylation, preceding removal from cells, plays an important role in detoxification of D-amino acids. In vitro, capable of acetylating histone H4 at 'Lys-8' and polyamines like putrescine, spermidine and spermine. The protein is D-amino-acid N-acetyltransferase HPA3 of Saccharomyces cerevisiae (strain ATCC 204508 / S288c) (Baker's yeast).